A 73-amino-acid chain; its full sequence is Translation initiation factor IF-1 (73 aa).

The S1-like domain maps to 1–72; sequence MAKEEAIEKD…SKGRIVYRYK (72 aa).

This sequence belongs to the IF-1 family. Component of the 30S ribosomal translation pre-initiation complex which assembles on the 30S ribosome in the order IF-2 and IF-3, IF-1 and N-formylmethionyl-tRNA(fMet); mRNA recruitment can occur at any time during PIC assembly.

Its subcellular location is the cytoplasm. Its function is as follows. One of the essential components for the initiation of protein synthesis. Stabilizes the binding of IF-2 and IF-3 on the 30S subunit to which N-formylmethionyl-tRNA(fMet) subsequently binds. Helps modulate mRNA selection, yielding the 30S pre-initiation complex (PIC). Upon addition of the 50S ribosomal subunit IF-1, IF-2 and IF-3 are released leaving the mature 70S translation initiation complex. The protein is Translation initiation factor IF-1 of Salinibacter ruber (strain DSM 13855 / M31).